The following is a 368-amino-acid chain: 2-aminoethylphosphonate--pyruvate transaminase (368 aa).

The residue at position 192 (Lys192) is an N6-(pyridoxal phosphate)lysine.

Belongs to the class-V pyridoxal-phosphate-dependent aminotransferase family. PhnW subfamily. As to quaternary structure, homodimer. Requires pyridoxal 5'-phosphate as cofactor.

The enzyme catalyses (2-aminoethyl)phosphonate + pyruvate = phosphonoacetaldehyde + L-alanine. In terms of biological role, involved in phosphonate degradation. This chain is 2-aminoethylphosphonate--pyruvate transaminase, found in Pseudomonas putida (strain ATCC 700007 / DSM 6899 / JCM 31910 / BCRC 17059 / LMG 24140 / F1).